The following is a 536-amino-acid chain: MKQSSNVPAFLSKLWTLVEETHTNEFITWSQNGQSFLVLDEQRFAKEILPKYFKHNNMASFVRQLNMYGFRKVVHIDSGIVKQERDGPVEFQHPYFKQGQDDLLENIKRKVSSSKPEENKIRQEDLTKIISSAQKVQIKQETIESRLSELKSENESLWKEVSELRAKHAQQQQVIRKIVQFIVTLVQNNQLVSLKRKRPLLLNTNGAQKKNLFQHIVKEPTDNHHHKVPHSRTEGLKPRERISDDIIIYDVTDDNADEENIPVIPETNEDVISDPSNCSQYPDIVIVEDDNEDEYAPVIQSGEQNEPARESLSSGSDGSSPLMSSAVQLNGSSSLTSEDPVTMMDSILNDNINLLGKVELLDYLDSIDCSLEDFQAMLSGRQFSIDPDLLVDLFTSSVQMNPTDYINNTKSENKGLETTKNNVVQPVSEEGRKSKSKPDKQLIQYTAFPLLAFLDGNPASSVEQASTTASSEVLSSVDKPIEVDELLDSSLDPEPTQSKLVRLEPLTEAEASEATLFYLCELAPAPLDSDMPLLDS.

Glycyl lysine isopeptide (Lys-Gly) (interchain with G-Cter in SUMO2) cross-links involve residues Lys-2 and Lys-82. The DNA-binding element occupies 7-112 (VPAFLSKLWT…LLENIKRKVS (106 aa)). The Nuclear localization signal motif lies at 108–122 (KRKVSSSKPEENKIR). Residues 119 to 192 (NKIRQEDLTK…VTLVQNNQLV (74 aa)) form a hydrophobic repeat HR-A/B region. Residues Lys-135, Lys-139, Lys-151, Lys-210, Lys-218, and Lys-237 each participate in a glycyl lysine isopeptide (Lys-Gly) (interchain with G-Cter in SUMO2) cross-link. Residues 195–210 (KRKRPLLLNTNGAQKK) carry the Nuclear localization signal motif. The tract at residues 300–337 (QSGEQNEPARESLSSGSDGSSPLMSSAVQLNGSSSLTS) is disordered. The span at 311 to 325 (SLSSGSDGSSPLMSS) shows a compositional bias: low complexity. Over residues 326–337 (AVQLNGSSSLTS) the composition is skewed to polar residues. The hydrophobic repeat HR-C stretch occupies residues 360 to 385 (LLDYLDSIDCSLEDFQAMLSGRQFSI). Positions 407 to 438 (NNTKSENKGLETTKNNVVQPVSEEGRKSKSKP) are disordered. Residues 429-438 (EEGRKSKSKP) show a composition bias toward basic and acidic residues.

This sequence belongs to the HSF family. As to quaternary structure, DNA-binding homotrimer in stressed or heat shocked cells, otherwise found as a homodimer.

The protein localises to the cytoplasm. The protein resides in the nucleus. In terms of biological role, DNA-binding protein that specifically binds heat shock promoter elements (HSE) and activates transcription. In higher eukaryotes, HSF is unable to bind to the HSE unless the cells are heat shocked. The protein is Heat shock factor protein 2 (HSF2) of Homo sapiens (Human).